We begin with the raw amino-acid sequence, 72 residues long: DNA-directed RNA polymerase subunit omega (72 aa).

It belongs to the RNA polymerase subunit omega family. The RNAP catalytic core consists of 2 alpha, 1 beta, 1 beta' and 1 omega subunit. When a sigma factor is associated with the core the holoenzyme is formed, which can initiate transcription.

It carries out the reaction RNA(n) + a ribonucleoside 5'-triphosphate = RNA(n+1) + diphosphate. Promotes RNA polymerase assembly. Latches the N- and C-terminal regions of the beta' subunit thereby facilitating its interaction with the beta and alpha subunits. The protein is DNA-directed RNA polymerase subunit omega of Staphylococcus aureus (strain Mu3 / ATCC 700698).